The primary structure comprises 237 residues: Protein GrpE (237 aa).

2 disordered regions span residues 1 to 52 (MSGD…RLQQ) and 200 to 237 (KVSMGPGPQSGASPSSAQSNDDSTATFQGEADPAEPGV). The segment covering 27–40 (ASMNSDEGQPSAQS) has biased composition (polar residues). The segment covering 204 to 218 (GPGPQSGASPSSAQS) has biased composition (low complexity).

The protein belongs to the GrpE family. In terms of assembly, homodimer.

The protein localises to the cytoplasm. Functionally, participates actively in the response to hyperosmotic and heat shock by preventing the aggregation of stress-denatured proteins, in association with DnaK and GrpE. It is the nucleotide exchange factor for DnaK and may function as a thermosensor. Unfolded proteins bind initially to DnaJ; upon interaction with the DnaJ-bound protein, DnaK hydrolyzes its bound ATP, resulting in the formation of a stable complex. GrpE releases ADP from DnaK; ATP binding to DnaK triggers the release of the substrate protein, thus completing the reaction cycle. Several rounds of ATP-dependent interactions between DnaJ, DnaK and GrpE are required for fully efficient folding. This chain is Protein GrpE, found in Prochlorococcus marinus (strain MIT 9303).